Here is a 119-residue protein sequence, read N- to C-terminus: Large ribosomal subunit protein eL31z (119 aa).

Belongs to the eukaryotic ribosomal protein eL31 family.

The protein is Large ribosomal subunit protein eL31z (RPL31A) of Arabidopsis thaliana (Mouse-ear cress).